We begin with the raw amino-acid sequence, 875 residues long: Neurotrypsin (875 aa).

Residues 1-20 (MTLARFVLALVLGALPEVVG) form the signal peptide. An N-linked (GlcNAc...) asparagine glycan is attached at asparagine 26. The disordered stretch occupies residues 30-87 (HHRHRHSPPPGPQYPYYLPTHQRPPRTRPPPPLPRFPRPPRALPAQRPHALQAGHTPR). Residues 56–71 (TRPPPPLPRFPRPPRA) show a composition bias toward pro residues. The 73-residue stretch at 93–165 (CPAGELWVSV…GKVDWGYCDC (73 aa)) folds into the Kringle domain. Cystine bridges form between cysteine 93–cysteine 165, cysteine 109–cysteine 149, cysteine 138–cysteine 163, cysteine 195–cysteine 259, cysteine 208–cysteine 269, cysteine 239–cysteine 249, cysteine 305–cysteine 369, cysteine 318–cysteine 379, cysteine 349–cysteine 359, cysteine 412–cysteine 475, cysteine 425–cysteine 485, cysteine 455–cysteine 465, cysteine 525–cysteine 589, cysteine 538–cysteine 599, cysteine 569–cysteine 579, cysteine 619–cysteine 750, cysteine 661–cysteine 677, cysteine 765–cysteine 831, cysteine 794–cysteine 808, and cysteine 821–cysteine 850. SRCR domains are found at residues 170 to 271 (VRLR…TCSF), 280 to 381 (IRLV…SCTP), 387 to 487 (IRLA…ACYP), and 500 to 601 (VRLM…ICDY). Residues 619–630 (CGLRLLHRRQKR) form a zymogen activation region region. One can recognise a Peptidase S1 domain in the interval 631 to 874 (IIGGKNSLRG…FVPWIKSVTK (244 aa)). Residue histidine 676 is the Charge relay system of the active site. An N-linked (GlcNAc...) asparagine glycan is attached at asparagine 683. Aspartate 726 acts as the Charge relay system in catalysis. Catalysis depends on serine 825, which acts as the Charge relay system.

The protein belongs to the peptidase S1 family.

Its subcellular location is the secreted. Its function is as follows. Plays a role in neuronal plasticity and the proteolytic action may subserve structural reorganizations associated with learning and memory operations. The chain is Neurotrypsin (PRSS12) from Macaca mulatta (Rhesus macaque).